We begin with the raw amino-acid sequence, 93 residues long: Protein F-93 (93 aa).

Homodimer.

Functionally, probable transcription factor that recognizes a (pseudo-)palindromic DNA target sequence. The protein is Protein F-93 of Saccharolobus solfataricus (Sulfolobus solfataricus).